The chain runs to 402 residues: DNA polymerase IV (402 aa).

The 183-residue stretch at 5-187 (ILLADMNSFY…LPVRELFGVG (183 aa)) folds into the UmuC domain. Mg(2+) contacts are provided by Asp9 and Asp105. Glu106 is an active-site residue.

This sequence belongs to the DNA polymerase type-Y family. Monomer. Mg(2+) serves as cofactor.

It localises to the cytoplasm. It carries out the reaction DNA(n) + a 2'-deoxyribonucleoside 5'-triphosphate = DNA(n+1) + diphosphate. Functionally, poorly processive, error-prone DNA polymerase involved in untargeted mutagenesis. Copies undamaged DNA at stalled replication forks, which arise in vivo from mismatched or misaligned primer ends. These misaligned primers can be extended by PolIV. Exhibits no 3'-5' exonuclease (proofreading) activity. May be involved in translesional synthesis, in conjunction with the beta clamp from PolIII. This is DNA polymerase IV from Pelotomaculum thermopropionicum (strain DSM 13744 / JCM 10971 / SI).